Reading from the N-terminus, the 187-residue chain is Elongation factor P (187 aa).

K34 carries the N6-(3,6-diaminohexanoyl)-5-hydroxylysine modification.

Belongs to the elongation factor P family. In terms of processing, may be beta-lysylated on the epsilon-amino group of Lys-34 by the combined action of EpmA and EpmB, and then hydroxylated on the C5 position of the same residue by EpmC (if this protein is present). Lysylation is critical for the stimulatory effect of EF-P on peptide-bond formation. The lysylation moiety may extend toward the peptidyltransferase center and stabilize the terminal 3-CCA end of the tRNA. Hydroxylation of the C5 position on Lys-34 may allow additional potential stabilizing hydrogen-bond interactions with the P-tRNA.

The protein localises to the cytoplasm. Its pathway is protein biosynthesis; polypeptide chain elongation. Functionally, involved in peptide bond synthesis. Alleviates ribosome stalling that occurs when 3 or more consecutive Pro residues or the sequence PPG is present in a protein, possibly by augmenting the peptidyl transferase activity of the ribosome. Modification of Lys-34 is required for alleviation. In Vesicomyosocius okutanii subsp. Calyptogena okutanii (strain HA), this protein is Elongation factor P.